Here is a 474-residue protein sequence, read N- to C-terminus: Cell division protein FtsP (474 aa).

The segment at residues 1–27 (MSLSRRQFIQAAGLALGAGSLPLRAQA) is a signal peptide (tat-type signal). The Plastocyanin-like domain occupies 229 to 288 (WVRLRLLNASNARRYTLQLSDGRPLYVVASDQGFLPAPVAVQQLSLAPGERREVVIDMSQ).

The protein belongs to the FtsP family. Predicted to be exported by the Tat system. The position of the signal peptide cleavage has not been experimentally proven.

It localises to the periplasm. Its function is as follows. Cell division protein that is required for growth during stress conditions. May be involved in protecting or stabilizing the divisomal assembly under conditions of stress. The chain is Cell division protein FtsP from Yersinia pestis.